Consider the following 138-residue polypeptide: Acidic phospholipase A2 jerdoxin (138 aa).

Positions 1–16 are cleaved as a signal peptide; that stretch reads MRTLWIMAVLLVGVEG. Disulfide bonds link Cys-42–Cys-131, Cys-44–Cys-60, Cys-59–Cys-111, Cys-65–Cys-138, Cys-66–Cys-104, Cys-73–Cys-97, and Cys-91–Cys-102. Ca(2+) contacts are provided by Tyr-43, Gly-45, and Gly-47. His-63 is an active-site residue. Asp-64 is a binding site for Ca(2+). Asp-105 is an active-site residue.

It belongs to the phospholipase A2 family. Group II subfamily. D49 sub-subfamily. In terms of assembly, monomer. Ca(2+) serves as cofactor. As to expression, expressed by the venom gland.

It is found in the secreted. It catalyses the reaction a 1,2-diacyl-sn-glycero-3-phosphocholine + H2O = a 1-acyl-sn-glycero-3-phosphocholine + a fatty acid + H(+). Its function is as follows. Snake venom phospholipase A2 (PLA2) that displays edema-inducing activities, exhibits indirect hemolytic activity, and inhibits ADP-induced platelet aggregation. PLA2 catalyzes the calcium-dependent hydrolysis of the 2-acyl groups in 3-sn-phosphoglycerides. The protein is Acidic phospholipase A2 jerdoxin of Protobothrops jerdonii (Jerdon's pitviper).